The sequence spans 57 residues: uncharacterized protein (57 aa).

A signal peptide spans 1 to 22; that stretch reads MNEIIITIIVLILLLFITLSRN. Residues 26 to 57 adopt a coiled-coil conformation; the sequence is NNQSNNGKKEKLIKCKKEVQQLRQKLDQLTFQ.

This is an uncharacterized protein from Acheta domesticus (House cricket).